The chain runs to 202 residues: Urease accessory protein UreF (202 aa).

Belongs to the UreF family. As to quaternary structure, ureD, UreF and UreG form a complex that acts as a GTP-hydrolysis-dependent molecular chaperone, activating the urease apoprotein by helping to assemble the nickel containing metallocenter of UreC. The UreE protein probably delivers the nickel.

The protein localises to the cytoplasm. Required for maturation of urease via the functional incorporation of the urease nickel metallocenter. The sequence is that of Urease accessory protein UreF from Sporosarcina pasteurii (Bacillus pasteurii).